We begin with the raw amino-acid sequence, 369 residues long: Endo-1,4-beta-xylanase A (369 aa).

Positions 1–20 (MRKLTQFCLGLMLLPIAAVA) are cleaved as a signal peptide. Positions 21–367 (QNQPTMKDVL…KPVVKEIIKL (347 aa)) constitute a GH10 domain. Catalysis depends on Glu-156, which acts as the Proton donor. Glu-261 serves as the catalytic Nucleophile.

It belongs to the glycosyl hydrolase 10 (cellulase F) family.

It carries out the reaction Endohydrolysis of (1-&gt;4)-beta-D-xylosidic linkages in xylans.. It functions in the pathway glycan degradation; xylan degradation. This Xylanibacter ruminicola (Prevotella ruminicola) protein is Endo-1,4-beta-xylanase A (xynA).